The following is a 220-amino-acid chain: Guanylate kinase (220 aa).

The Guanylate kinase-like domain maps to 16-195 (GLMFVLSSPS…AFESVKAILR (180 aa)). Position 23–30 (23–30 (SPSGAGKT)) interacts with ATP.

This sequence belongs to the guanylate kinase family.

It localises to the cytoplasm. The catalysed reaction is GMP + ATP = GDP + ADP. In terms of biological role, essential for recycling GMP and indirectly, cGMP. This chain is Guanylate kinase, found in Rhodopseudomonas palustris (strain HaA2).